A 269-amino-acid polypeptide reads, in one-letter code: Shikimate dehydrogenase (NADP(+)) (269 aa).

Shikimate-binding positions include 14–16 (SKS) and T61. K65 acts as the Proton acceptor in catalysis. E77 is a binding site for NADP(+). Shikimate contacts are provided by N86 and D102. NADP(+) contacts are provided by residues 126–130 (GAGGA), 149–154 (NRTLSK), and M213. Position 215 (Y215) interacts with shikimate. G238 is an NADP(+) binding site.

This sequence belongs to the shikimate dehydrogenase family. Homodimer.

It carries out the reaction shikimate + NADP(+) = 3-dehydroshikimate + NADPH + H(+). The protein operates within metabolic intermediate biosynthesis; chorismate biosynthesis; chorismate from D-erythrose 4-phosphate and phosphoenolpyruvate: step 4/7. In terms of biological role, involved in the biosynthesis of the chorismate, which leads to the biosynthesis of aromatic amino acids. Catalyzes the reversible NADPH linked reduction of 3-dehydroshikimate (DHSA) to yield shikimate (SA). This chain is Shikimate dehydrogenase (NADP(+)), found in Pasteurella multocida (strain Pm70).